The following is a 102-amino-acid chain: Small ribosomal subunit protein uS10 (102 aa).

The interval S35 to T58 is disordered.

Belongs to the universal ribosomal protein uS10 family. Part of the 30S ribosomal subunit.

In terms of biological role, involved in the binding of tRNA to the ribosomes. In Halorubrum lacusprofundi (strain ATCC 49239 / DSM 5036 / JCM 8891 / ACAM 34), this protein is Small ribosomal subunit protein uS10.